A 101-amino-acid chain; its full sequence is Urease subunit beta (101 aa).

Belongs to the urease beta subunit family. In terms of assembly, heterotrimer of UreA (gamma), UreB (beta) and UreC (alpha) subunits. Three heterotrimers associate to form the active enzyme.

The protein localises to the cytoplasm. It catalyses the reaction urea + 2 H2O + H(+) = hydrogencarbonate + 2 NH4(+). It functions in the pathway nitrogen metabolism; urea degradation; CO(2) and NH(3) from urea (urease route): step 1/1. The sequence is that of Urease subunit beta from Sinorhizobium fredii (strain NBRC 101917 / NGR234).